A 459-amino-acid polypeptide reads, in one-letter code: tRNA modification GTPase MnmE (459 aa).

(6S)-5-formyl-5,6,7,8-tetrahydrofolate is bound by residues arginine 22, glutamate 85, and arginine 124. Positions glycine 221–phenylalanine 380 constitute a TrmE-type G domain. Asparagine 231 provides a ligand contact to K(+). Residues asparagine 231–serine 236, threonine 250–threonine 256, and aspartate 275–glycine 278 contribute to the GTP site. Serine 235 contributes to the Mg(2+) binding site. Residues threonine 250, valine 252, and threonine 255 each coordinate K(+). Threonine 256 serves as a coordination point for Mg(2+). Residue lysine 459 coordinates (6S)-5-formyl-5,6,7,8-tetrahydrofolate.

It belongs to the TRAFAC class TrmE-Era-EngA-EngB-Septin-like GTPase superfamily. TrmE GTPase family. In terms of assembly, homodimer. Heterotetramer of two MnmE and two MnmG subunits. The cofactor is K(+).

The protein resides in the cytoplasm. In terms of biological role, exhibits a very high intrinsic GTPase hydrolysis rate. Involved in the addition of a carboxymethylaminomethyl (cmnm) group at the wobble position (U34) of certain tRNAs, forming tRNA-cmnm(5)s(2)U34. This chain is tRNA modification GTPase MnmE, found in Staphylococcus aureus (strain Mu3 / ATCC 700698).